The following is a 287-amino-acid chain: ADP-dependent (S)-NAD(P)H-hydrate dehydratase (287 aa).

Positions 7–283 (GEDDVRKFVP…ELLPSVMKPF (277 aa)) constitute a YjeF C-terminal domain. Residues alanine 42 and histidine 159 each contribute to the (6S)-NADPHX site. Residues 196–200 (KGPTD) and glycine 224 each bind AMP. Aspartate 225 is a binding site for (6S)-NADPHX.

This sequence belongs to the NnrD/CARKD family. Homotetramer. It depends on Mg(2+) as a cofactor.

It catalyses the reaction (6S)-NADHX + ADP = AMP + phosphate + NADH + H(+). The enzyme catalyses (6S)-NADPHX + ADP = AMP + phosphate + NADPH + H(+). In terms of biological role, catalyzes the dehydration of the S-form of NAD(P)HX at the expense of ADP, which is converted to AMP. Together with NAD(P)HX epimerase, which catalyzes the epimerization of the S- and R-forms, the enzyme allows the repair of both epimers of NAD(P)HX, a damaged form of NAD(P)H that is a result of enzymatic or heat-dependent hydration. The protein is ADP-dependent (S)-NAD(P)H-hydrate dehydratase of Cenarchaeum symbiosum (strain A).